A 439-amino-acid chain; its full sequence is Glutamine synthetase (439 aa).

The 86-residue stretch at 13 to 98 (ENVRFIRLQF…VICDVYTPDG (86 aa)) folds into the GS beta-grasp domain. The GS catalytic domain maps to 105-439 (PRYRLRRMME…NWELQRYLYL (335 aa)). The Mg(2+) site is built by glutamate 128 and glutamate 130. Residue glutamate 180 coordinates ATP. Mg(2+) is bound by residues glutamate 185 and glutamate 192. Residues 236–237 (NG) and glycine 237 contribute to the L-glutamate site. Histidine 241 is a binding site for Mg(2+). Residues 243–245 (HMS) and serine 245 each bind ATP. Arginine 294, glutamate 300, and arginine 312 together coordinate L-glutamate. Residues arginine 312, arginine 317, and lysine 324 each contribute to the ATP site. Glutamate 329 contributes to the Mg(2+) binding site. Arginine 331 contacts L-glutamate.

Belongs to the glutamine synthetase family. In terms of assembly, oligomer of 12 subunits arranged in the form of two hexagons. In its feedback-inhibited form, interacts with TnrA in order to block its DNA-binding activity. It depends on Mg(2+) as a cofactor.

It localises to the cytoplasm. It catalyses the reaction L-glutamate + NH4(+) + ATP = L-glutamine + ADP + phosphate + H(+). With respect to regulation, inhibited by glutamine. Its function is as follows. Glutamine synthetase (GS) is an unusual multitasking protein that functions as an enzyme, a transcription coregulator, and a chaperone in ammonium assimilation and in the regulation of genes involved in nitrogen metabolism. It catalyzes the ATP-dependent biosynthesis of glutamine from glutamate and ammonia. Feedback-inhibited GlnA also interacts with and regulates the activity of the transcriptional regulator TnrA. During nitrogen limitation, TnrA is in its DNA-binding active state and turns on the transcription of genes required for nitrogen assimilation. Under conditions of nitrogen excess, feedback-inhibited GlnA forms a stable complex with TnrA, which inhibits its DNA-binding activity. In contrast, feedback-inhibited GlnA acts as a chaperone to stabilize the DNA-binding activity of GlnR, which represses the transcription of nitrogen assimilation genes. The polypeptide is Glutamine synthetase (Thermotoga maritima (strain ATCC 43589 / DSM 3109 / JCM 10099 / NBRC 100826 / MSB8)).